The chain runs to 343 residues: Multidrug resistance protein MdtN (343 aa).

Residues 1–12 lie on the Cytoplasmic side of the membrane; the sequence is MESTPKKAPRSK. A helical; Signal-anchor for type II membrane protein transmembrane segment spans residues 13-33; sequence FPALLVVALALVALVFVIWRV. The Periplasmic portion of the chain corresponds to 34–343; that stretch reads DSAPSTNDAY…ASAVANLEPQ (310 aa).

This sequence belongs to the membrane fusion protein (MFP) (TC 8.A.1) family. In terms of assembly, could be part of a tripartite efflux system composed of MdtN, MdtO and MdtP.

The protein resides in the cell inner membrane. In terms of biological role, could be involved in resistance to puromycin, acriflavine and tetraphenylarsonium chloride. The polypeptide is Multidrug resistance protein MdtN (mdtN) (Escherichia coli O157:H7).